The primary structure comprises 343 residues: MAEEVSNKQVILKNYVTGYPKESDMEIKNVTIKLKVPEGSNDVVVKNLYLSCDPYMRSRMRKIEGSYVESFAPGSPITGYGVAKVLESGDPKFQKGDLVWGMTGWEEYSIITPTQTLFKIHDKDVPLSYYTGILGMPGMTAYAGFHEVCSPKKGETVFVSAASGAVGQLVGQFAKMLGCYVVGSAGSKEKVDLLKSKFGFDEAFNYKEEQDLSAALKRYFPDGIDIYFENVGGKMLDAVLVNMKLYGRIAVCGMISQYNLEQTEGVHNLFCLITKRIRMEGFLVFDYYHLYPKYLEMVIPQIKAGKVVYVEDVAHGLESAPTALVGLFSGRNIGKQVVMVSRE.

Substrate contacts are provided by tyrosine 55 and tyrosine 80. NADP(+)-binding positions include 165 to 166, glycine 186, lysine 190, tyrosine 206, asparagine 230, cysteine 252, tyrosine 258, 282 to 284, and asparagine 332; these read AV and FLV.

Belongs to the NADP-dependent oxidoreductase L4BD family. As to quaternary structure, homodimer.

The catalysed reaction is an n-alkanal + NADP(+) = an alk-2-enal + NADPH + H(+). In terms of biological role, reduces the C=C double bonds of alpha, beta unsaturated enones, but has no activity on enones with an endocyclic C=C double-bond. Shows a high specificity for NADPH as the hybrid donor. Substrates are 1-nitrocyclohexene, 2-methylpentenal, trans-cinnamaldehyde, methyl-trans-2-methylcinnamaldehyde, trans-2-nonenal and 1-octen-3-one. Reduced activity with aplha-methyl transcinnamaldehyde, 1-cyclohexene-1-carboxaldehyde, methyl crotonate, (R)-pulegone, and dimethyl itaconate and no activity with maleimides, citral, (5R)- or (5S)-carvone, (S)-perillyl alcohol, and substituted cyclohexenones and cyclopentenones. May also act as a allyl-alcohol dehydrogenase by catalyzing the dehydrogenation of secondary allylic alcohols rather than saturated secondary alcohols. Allyl-alcohol dehydrogenase is specific for the S-stereoisomer of the alcohols. The chain is 2-alkenal reductase (NADP(+)-dependent) (DBR) from Nicotiana tabacum (Common tobacco).